The primary structure comprises 103 residues: Large ribosomal subunit protein bL21 (103 aa).

Belongs to the bacterial ribosomal protein bL21 family. In terms of assembly, part of the 50S ribosomal subunit. Contacts protein L20.

Functionally, this protein binds to 23S rRNA in the presence of protein L20. The sequence is that of Large ribosomal subunit protein bL21 from Kineococcus radiotolerans (strain ATCC BAA-149 / DSM 14245 / SRS30216).